The chain runs to 118 residues: NADH-quinone oxidoreductase subunit A 1 (118 aa).

A run of 3 helical transmembrane segments spans residues 1 to 21 (MLGV…FGLA), 60 to 80 (FYII…MYPW), and 87 to 107 (LGIF…VGYI).

This sequence belongs to the complex I subunit 3 family. As to quaternary structure, NDH-1 is composed of 14 different subunits. Subunits NuoA, H, J, K, L, M, N constitute the membrane sector of the complex.

It is found in the cell inner membrane. It catalyses the reaction a quinone + NADH + 5 H(+)(in) = a quinol + NAD(+) + 4 H(+)(out). In terms of biological role, NDH-1 shuttles electrons from NADH, via FMN and iron-sulfur (Fe-S) centers, to quinones in the respiratory chain. The immediate electron acceptor for the enzyme in this species is believed to be ubiquinone. Couples the redox reaction to proton translocation (for every two electrons transferred, four hydrogen ions are translocated across the cytoplasmic membrane), and thus conserves the redox energy in a proton gradient. The polypeptide is NADH-quinone oxidoreductase subunit A 1 (Geobacter sulfurreducens (strain ATCC 51573 / DSM 12127 / PCA)).